A 284-amino-acid chain; its full sequence is 2-dehydro-3-deoxyphosphooctonate aldolase (284 aa).

The protein belongs to the KdsA family.

It localises to the cytoplasm. It catalyses the reaction D-arabinose 5-phosphate + phosphoenolpyruvate + H2O = 3-deoxy-alpha-D-manno-2-octulosonate-8-phosphate + phosphate. The protein operates within carbohydrate biosynthesis; 3-deoxy-D-manno-octulosonate biosynthesis; 3-deoxy-D-manno-octulosonate from D-ribulose 5-phosphate: step 2/3. It functions in the pathway bacterial outer membrane biogenesis; lipopolysaccharide biosynthesis. In Sodalis glossinidius (strain morsitans), this protein is 2-dehydro-3-deoxyphosphooctonate aldolase.